A 332-amino-acid chain; its full sequence is Ribonucleoside-diphosphate reductase small chain C (332 aa).

Fe cation is bound by residues Asp-76, Glu-107, and His-110. The active site involves Tyr-114. Fe cation-binding residues include Glu-169, Glu-203, and His-206.

It belongs to the ribonucleoside diphosphate reductase small chain family. In terms of assembly, homodimer and heterodimer with RNR2A. Heterotetramer of two R1 and two R2 chains. Interacts with CSN7 (via C-terminal tail). Fe cation serves as cofactor. In terms of tissue distribution, expressed in roots, cauline and rosette leaves, stems and flowers.

It localises to the cytoplasm. It is found in the nucleus. The enzyme catalyses a 2'-deoxyribonucleoside 5'-diphosphate + [thioredoxin]-disulfide + H2O = a ribonucleoside 5'-diphosphate + [thioredoxin]-dithiol. Its function is as follows. Provides the precursors necessary for DNA synthesis. Catalyzes the biosynthesis of deoxyribonucleotides from the corresponding ribonucleotides. Involved in DNA damage repair and programmed cell death inhibition. This chain is Ribonucleoside-diphosphate reductase small chain C (TSO2), found in Arabidopsis thaliana (Mouse-ear cress).